Here is a 183-residue protein sequence, read N- to C-terminus: ARS-binding factor 2, mitochondrial (183 aa).

Residues Met1–Leu26 constitute a mitochondrion transit peptide. DNA-binding regions (HMG box) lie at residues Pro43 to Asp111 and Pro116 to Asn183.

It is found in the mitochondrion. Its subcellular location is the nucleus. Its function is as follows. Specific binding to the autonomously replicating sequence 1 (ARS1). Interaction with regulatory regions: probably involved in compacting the mitochondrial genome. It might play a positive role in gene expression and replication. The chain is ARS-binding factor 2, mitochondrial (ABF2) from Saccharomyces cerevisiae (strain ATCC 204508 / S288c) (Baker's yeast).